A 275-amino-acid polypeptide reads, in one-letter code: Ribosomal RNA small subunit methyltransferase A (275 aa).

Positions 21, 23, 48, 69, 94, and 115 each coordinate S-adenosyl-L-methionine.

Belongs to the class I-like SAM-binding methyltransferase superfamily. rRNA adenine N(6)-methyltransferase family. RsmA subfamily.

The protein resides in the cytoplasm. The catalysed reaction is adenosine(1518)/adenosine(1519) in 16S rRNA + 4 S-adenosyl-L-methionine = N(6)-dimethyladenosine(1518)/N(6)-dimethyladenosine(1519) in 16S rRNA + 4 S-adenosyl-L-homocysteine + 4 H(+). In terms of biological role, specifically dimethylates two adjacent adenosines (A1518 and A1519) in the loop of a conserved hairpin near the 3'-end of 16S rRNA in the 30S particle. May play a critical role in biogenesis of 30S subunits. The polypeptide is Ribosomal RNA small subunit methyltransferase A (Clostridium botulinum (strain Loch Maree / Type A3)).